Reading from the N-terminus, the 383-residue chain is Succinyl-diaminopimelate desuccinylase (383 aa).

A Zn(2+)-binding site is contributed by histidine 79. Aspartate 81 is an active-site residue. Aspartate 110 is a binding site for Zn(2+). Glutamate 141 serves as the catalytic Proton acceptor. Zn(2+) contacts are provided by glutamate 142, glutamate 170, and histidine 355.

Belongs to the peptidase M20A family. DapE subfamily. In terms of assembly, homodimer. Requires Zn(2+) as cofactor. Co(2+) serves as cofactor.

It catalyses the reaction N-succinyl-(2S,6S)-2,6-diaminopimelate + H2O = (2S,6S)-2,6-diaminopimelate + succinate. Its pathway is amino-acid biosynthesis; L-lysine biosynthesis via DAP pathway; LL-2,6-diaminopimelate from (S)-tetrahydrodipicolinate (succinylase route): step 3/3. In terms of biological role, catalyzes the hydrolysis of N-succinyl-L,L-diaminopimelic acid (SDAP), forming succinate and LL-2,6-diaminopimelate (DAP), an intermediate involved in the bacterial biosynthesis of lysine and meso-diaminopimelic acid, an essential component of bacterial cell walls. The polypeptide is Succinyl-diaminopimelate desuccinylase (Helicobacter pylori (strain Shi470)).